The chain runs to 93 residues: Pyrimidine/purine nucleoside phosphorylase (93 aa).

It belongs to the nucleoside phosphorylase PpnP family.

The catalysed reaction is a purine D-ribonucleoside + phosphate = a purine nucleobase + alpha-D-ribose 1-phosphate. It catalyses the reaction adenosine + phosphate = alpha-D-ribose 1-phosphate + adenine. The enzyme catalyses cytidine + phosphate = cytosine + alpha-D-ribose 1-phosphate. It carries out the reaction guanosine + phosphate = alpha-D-ribose 1-phosphate + guanine. The catalysed reaction is inosine + phosphate = alpha-D-ribose 1-phosphate + hypoxanthine. It catalyses the reaction thymidine + phosphate = 2-deoxy-alpha-D-ribose 1-phosphate + thymine. The enzyme catalyses uridine + phosphate = alpha-D-ribose 1-phosphate + uracil. It carries out the reaction xanthosine + phosphate = alpha-D-ribose 1-phosphate + xanthine. Functionally, catalyzes the phosphorolysis of diverse nucleosides, yielding D-ribose 1-phosphate and the respective free bases. Can use uridine, adenosine, guanosine, cytidine, thymidine, inosine and xanthosine as substrates. Also catalyzes the reverse reactions. The polypeptide is Pyrimidine/purine nucleoside phosphorylase (Sorangium cellulosum (strain So ce56) (Polyangium cellulosum (strain So ce56))).